We begin with the raw amino-acid sequence, 376 residues long: 4-hydroxy-3-methylbut-2-en-1-yl diphosphate synthase (flavodoxin) (376 aa).

[4Fe-4S] cluster-binding residues include C270, C273, C305, and E312.

Belongs to the IspG family. The cofactor is [4Fe-4S] cluster.

It catalyses the reaction (2E)-4-hydroxy-3-methylbut-2-enyl diphosphate + oxidized [flavodoxin] + H2O + 2 H(+) = 2-C-methyl-D-erythritol 2,4-cyclic diphosphate + reduced [flavodoxin]. It participates in isoprenoid biosynthesis; isopentenyl diphosphate biosynthesis via DXP pathway; isopentenyl diphosphate from 1-deoxy-D-xylulose 5-phosphate: step 5/6. Its function is as follows. Converts 2C-methyl-D-erythritol 2,4-cyclodiphosphate (ME-2,4cPP) into 1-hydroxy-2-methyl-2-(E)-butenyl 4-diphosphate. The polypeptide is 4-hydroxy-3-methylbut-2-en-1-yl diphosphate synthase (flavodoxin) (Colwellia psychrerythraea (strain 34H / ATCC BAA-681) (Vibrio psychroerythus)).